Reading from the N-terminus, the 549-residue chain is MKNINPTHTQAWKSLEAHKAELSNTTIQDLFKQEKNRFDDYSLTFNNQILVDFSKNNINQTTLSHLRQLAQECALDSAKEAMFTGEKINRTENRAVLHTALRNRTNTPVLVDGKDVMPEVNAVLAKMKDFCQRIISGEWKGYTGKAITDVVNIGIGGSDLGPYTVTEALRPYKNHLNMHFVSNVDGTHIAETLKKVNPETTLFLVASKTFTTQETMTNAQSARDWLLKAAKDESAVAKHFAALSTNAKDVEKFGIDTNNMFEFWDWVGGRYSLWSAIGLSIALSIGFENFEALLNGAHEMDKHFRSTPIEQNIPTTLALVGLWNTNFLGAQTEAILPYDQYLHRFAAYFQQGNMESNGKYVDRDGNVINNYQTGPIIWGEPGTNGQHAFYQLIHQGTTLIPCDFIAPAQSHNPLADHHNKLLSNFFAQTEALAFGKTKEEVEAEFIKAGKSLDDVKNIVPFKVFTGNKPTNSILVQKITPFTLGALIAMYEHKIFVQGVIFNIFSFDQWGVELGKQLANRILPELTDSEKVASHDSSTNGLINQFKTWR.

Glutamate 355 acts as the Proton donor in catalysis. Active-site residues include histidine 387 and lysine 515.

It belongs to the GPI family.

It localises to the cytoplasm. The enzyme catalyses alpha-D-glucose 6-phosphate = beta-D-fructose 6-phosphate. The protein operates within carbohydrate biosynthesis; gluconeogenesis. Its pathway is carbohydrate degradation; glycolysis; D-glyceraldehyde 3-phosphate and glycerone phosphate from D-glucose: step 2/4. Its function is as follows. Catalyzes the reversible isomerization of glucose-6-phosphate to fructose-6-phosphate. In Haemophilus influenzae (strain PittGG), this protein is Glucose-6-phosphate isomerase.